We begin with the raw amino-acid sequence, 270 residues long: Non-homologous end joining protein Ku (270 aa).

In terms of domain architecture, Ku spans 10–194; it reads SLGLLNIGIK…NYPIQKQELT (185 aa).

This sequence belongs to the prokaryotic Ku family. Homodimer. Interacts with LigD.

Functionally, with LigD forms a non-homologous end joining (NHEJ) DNA repair enzyme, which repairs dsDNA breaks with reduced fidelity. Binds linear dsDNA with 5'- and 3'- overhangs but not closed circular dsDNA nor ssDNA. Recruits and stimulates the ligase activity of LigD. In Bacillus thuringiensis subsp. konkukian (strain 97-27), this protein is Non-homologous end joining protein Ku.